The sequence spans 1709 residues: Hybrid signal transduction histidine kinase L (1709 aa).

Disordered regions lie at residues 52–192 (SNNN…SPPH), 206–276 (FFSG…NSSD), 413–535 (TSNS…NNSC), and 554–615 (QQQQ…IFNN). Over residues 53 to 87 (NNNNNNNNNNNNNNNNNNNNNNNNNNNNNNNNNNN) the composition is skewed to low complexity. Basic and acidic residues predominate over residues 88 to 100 (NEEKSNNETEKTL). Residues 106–148 (TTTTTTTNNNNNNNNNNNNNNNNNNNNNNNNNNNNNNNNNNTN) are compositionally biased toward low complexity. The segment covering 149-170 (SSNDIYMNSPSSTLSSPGNAGN) has biased composition (polar residues). 3 stretches are compositionally biased toward low complexity: residues 413–466 (TSNS…TPNS), 486–535 (NNSP…NNSC), and 554–576 (QQQQQQQSQPTTPTQSTQSPTTS). The segment covering 585–610 (LTINTSFKTSPMSSPKSFNKPSQSPQ) has biased composition (polar residues). Residues 700-771 (ATRKMVTCIE…ATLTDKKTWN (72 aa)) form the PAS domain. Residues 770 to 822 (WNGFIRTRHNNNTLIYFEASISPVLDQFQQILYYNCTKRDVTQKRIDEESKTL) enclose the PAC domain. One can recognise a Histidine kinase domain in the interval 837 to 1059 (MMSHDIRTPM…TFTCILKFKK (223 aa)). H840 is modified (phosphohistidine; by autocatalysis). Disordered stretches follow at residues 1068 to 1112 (LLPA…HQQH) and 1137 to 1298 (QHQL…PTSP). 3 stretches are compositionally biased toward low complexity: residues 1075–1112 (LQQQQQQQQHQQQTQFHQHQQQTQFHQHQQQQLQHQQH), 1137–1153 (QHQLQQRQHHQQQLQQQ), and 1176–1194 (NQHIQQQQQQQQQQQQQQQ). Over residues 1204-1221 (HNSHGHNHHGSHHNHNHQ) the composition is skewed to basic residues. 2 stretches are compositionally biased toward polar residues: residues 1244–1257 (NEQQLESITENSFS) and 1275–1298 (NISQSPSPQSIHNGTTINQQPTSP). Response regulatory domains follow at residues 1312-1492 (KMLF…MMYL) and 1570-1692 (KVLV…KKYG). Residue D1366 is modified to 4-aspartylphosphate. 2 stretches are compositionally biased toward low complexity: residues 1390–1412 (QHLQQQQEQEQQQQQEQQQSELQ) and 1420–1440 (KNSSQNNDNNNNNNKSNSSGG). The disordered stretch occupies residues 1390–1440 (QHLQQQQEQEQQQQQEQQQSELQKQPDVENKNSSQNNDNNNNNNKSNSSGG). Residue D1622 is modified to 4-aspartylphosphate.

In terms of processing, activation probably requires transfer of a phosphate group between a histidine in the kinase core (transmitter) domain and an aspartate of the receiver domain.

It carries out the reaction ATP + protein L-histidine = ADP + protein N-phospho-L-histidine.. Functionally, acts as a receptor histidine kinase for a signal transduction pathway. This protein undergoes an ATP-dependent autophosphorylation at a conserved histidine residue in the kinase core, and a phosphoryl group is then transferred to a conserved aspartate residue in the receiver domain. This is Hybrid signal transduction histidine kinase L (dhkL) from Dictyostelium discoideum (Social amoeba).